Here is a 356-residue protein sequence, read N- to C-terminus: NADH-quinone oxidoreductase subunit H (356 aa).

8 helical membrane-spanning segments follow: residues 18-38 (IIMI…IAYI), 87-107 (GVFL…WAVI), 120-140 (VGIL…IMAG), 166-186 (IGFV…SAVV), 205-225 (ILNW…VSAL), 265-285 (AITT…LPPI), 292-312 (WVPG…LIAM), and 333-353 (FLPL…FAGI).

It belongs to the complex I subunit 1 family. In terms of assembly, NDH-1 is composed of 14 different subunits. Subunits NuoA, H, J, K, L, M, N constitute the membrane sector of the complex.

Its subcellular location is the cell inner membrane. The catalysed reaction is a quinone + NADH + 5 H(+)(in) = a quinol + NAD(+) + 4 H(+)(out). In terms of biological role, NDH-1 shuttles electrons from NADH, via FMN and iron-sulfur (Fe-S) centers, to quinones in the respiratory chain. The immediate electron acceptor for the enzyme in this species is believed to be ubiquinone. Couples the redox reaction to proton translocation (for every two electrons transferred, four hydrogen ions are translocated across the cytoplasmic membrane), and thus conserves the redox energy in a proton gradient. This subunit may bind ubiquinone. The sequence is that of NADH-quinone oxidoreductase subunit H from Bradyrhizobium sp. (strain ORS 278).